A 538-amino-acid polypeptide reads, in one-letter code: Endoglucanase 16 (538 aa).

Positions 1–26 (MRWRRVGDVVAVALLLGAAAAAAAAA) are cleaved as a signal peptide. Asp-83 serves as the catalytic Nucleophile. Active-site residues include His-431, Asp-483, and Glu-492. Residues 513–538 (RQESPSTTTTTTATTSSPEMGLSVNR) are disordered. The span at 516-530 (SPSTTTTTTATTSSP) shows a compositional bias: low complexity.

It belongs to the glycosyl hydrolase 9 (cellulase E) family.

The protein localises to the secreted. The catalysed reaction is Endohydrolysis of (1-&gt;4)-beta-D-glucosidic linkages in cellulose, lichenin and cereal beta-D-glucans.. This Oryza sativa subsp. japonica (Rice) protein is Endoglucanase 16.